The sequence spans 408 residues: Innexin-12 (408 aa).

A helical membrane pass occupies residues 29-49; the sequence is TIGLVLASAFITGWSFVGSPI. An N-linked (GlcNAc...) asparagine glycan is attached at asparagine 99. The next 3 membrane-spanning stretches (helical) occupy residues 113–133, 197–217, and 284–304; these read QWVP…VVIW, VITS…FQFV, and IFVA…TNTI.

The protein belongs to the pannexin family.

The protein localises to the cell membrane. It is found in the cell junction. The protein resides in the gap junction. In terms of biological role, structural component of the gap junctions. Plays a role in oocyte directional transit in the spermatheca during ovulation by facilitating the directional propagation of the calcium signal in the spermatheca. Plays a role in male tail tip morphogenesis. The protein is Innexin-12 of Caenorhabditis elegans.